A 391-amino-acid polypeptide reads, in one-letter code: Curcumin synthase 2 (391 aa).

C166 is a catalytic residue.

This sequence belongs to the thiolase-like superfamily. Chalcone/stilbene synthases family. In terms of assembly, homodimer.

The enzyme catalyses (E)-feruloylacetyl-CoA + (E)-feruloyl-CoA + H2O = curcumin + CO2 + 2 CoA. It participates in secondary metabolite biosynthesis; flavonoid biosynthesis. Functionally, catalyzes the synthesis of curcumin by condensing feruloyl-CoA with a diketide-CoA in the curcuminoid biosynthesis. In Curcuma longa (Turmeric), this protein is Curcumin synthase 2 (CURS2).